A 257-amino-acid chain; its full sequence is 5'-nucleotidase SurE (257 aa).

4 residues coordinate a divalent metal cation: Asp-9, Asp-10, Ser-40, and Asn-92.

It belongs to the SurE nucleotidase family. The cofactor is a divalent metal cation.

The protein resides in the cytoplasm. It carries out the reaction a ribonucleoside 5'-phosphate + H2O = a ribonucleoside + phosphate. In terms of biological role, nucleotidase that shows phosphatase activity on nucleoside 5'-monophosphates. This Alkalilimnicola ehrlichii (strain ATCC BAA-1101 / DSM 17681 / MLHE-1) protein is 5'-nucleotidase SurE.